The chain runs to 314 residues: ATP synthase gamma chain (314 aa).

Belongs to the ATPase gamma chain family. As to quaternary structure, F-type ATPases have 2 components, CF(1) - the catalytic core - and CF(0) - the membrane proton channel. CF(1) has five subunits: alpha(3), beta(3), gamma(1), delta(1), epsilon(1). CF(0) has three main subunits: a, b and c.

Its subcellular location is the cellular thylakoid membrane. Functionally, produces ATP from ADP in the presence of a proton gradient across the membrane. The gamma chain is believed to be important in regulating ATPase activity and the flow of protons through the CF(0) complex. The protein is ATP synthase gamma chain of Rippkaea orientalis (strain PCC 8801 / RF-1) (Cyanothece sp. (strain PCC 8801)).